Here is a 747-residue protein sequence, read N- to C-terminus: MGLSDIPANYMQQTGHNLQQQQLHHHHHHNHNHNHNAAAAAAAAAHVLAMENSELLMSPKDKMSSKKKMHLLKKIKKRFGLVRRSPSSCPGPNNLPPLQFHTVHGDNIRISRDGTLARRFESFCRAITFSARPVRINERICVKFAEISNNWNGGIRFGFTSNDPASLEGALPKYACPDLTNRPGFWAKALHEQYCEKDNILYYYVNNAGDVIYGINNEEKGVILSGIDTRGLLWTVIDIYGNCTGIEFLDARIYMYQQQQQQQQQQQQQLQQQQLPQQQLPQQQQQLPQQQLTAHHPLQQSRRSLPGGTGVVVDHELERHVMPSLQSLHLAGTAAGIIEHDLANGLPPLRYNANGRLIPVPFHITKGRNVRLSHDRFVASRTESDFCQGYVFTARPIRIGEKLIVQVLKTEQMYVGALALGLTSCNPALLQPNDLPNDSDFLLDRPEYWVVSKDIAAAPQRGDEIAFFVAPNGEVSISKNNGPAVVVMHVDQSLQLWAFLDVYGSTQSLRMFRQQLPNMVAYPSQPQINAAAAAAAAAASTTAASSRMLPMAESLNSLNAGQMLRSKMQLNVTQSSSTLASTAGNGSRMISMPSNGDILQIQPNGGGTVLVVNLPPRSSSHDLNGQLAGRQAASAATVTSSGILAGACSSGTLISTTSSQQYIEPVAQSTSTLNGTKWKDSLSDQQSTDSSAECTICYENPIDSVLYMCGHMCMCYDCAIEQWRGVGGGQCPLCRAVIRDVIRTYTT.

The NHR 1 domain maps to P97–A251. Residues L280–L292 show a composition bias toward low complexity. Residues L280–T309 form a disordered region. Residues P359–Q514 enclose the NHR 2 domain. The segment at C694–R735 adopts an RING-type zinc-finger fold.

The protein resides in the nucleus. In terms of biological role, involved in neurogenesis. Interacts with other neurogenic proteins in the specification of the neuroblast versus epidermoblast cell fate. The polypeptide is Protein neuralized (neur) (Drosophila virilis (Fruit fly)).